We begin with the raw amino-acid sequence, 113 residues long: Ig heavy chain V-III region A4 (113 aa).

One can recognise an Ig-like domain in the interval 1–113 (EVKLEESGGG…YWGQGTLVTV (113 aa)). A disulfide bridge links C22 with C98.

This is Ig heavy chain V-III region A4 from Mus musculus (Mouse).